A 337-amino-acid polypeptide reads, in one-letter code: Ornithine carbamoyltransferase (337 aa).

Residues 57 to 60 (STRT), Gln-84, Arg-108, and 135 to 138 (HPTQ) contribute to the carbamoyl phosphate site. L-ornithine-binding positions include Asn-167, Asp-231, and 235 to 236 (SM). Carbamoyl phosphate is bound by residues 272–273 (CL) and Arg-317.

It belongs to the aspartate/ornithine carbamoyltransferase superfamily. OTCase family.

The protein localises to the cytoplasm. It catalyses the reaction carbamoyl phosphate + L-ornithine = L-citrulline + phosphate + H(+). Its pathway is amino-acid degradation; L-arginine degradation via ADI pathway; carbamoyl phosphate from L-arginine: step 2/2. Reversibly catalyzes the transfer of the carbamoyl group from carbamoyl phosphate (CP) to the N(epsilon) atom of ornithine (ORN) to produce L-citrulline. This is Ornithine carbamoyltransferase from Streptococcus equi subsp. equi (strain 4047).